A 212-amino-acid chain; its full sequence is Adenine phosphoribosyltransferase (212 aa).

It belongs to the purine/pyrimidine phosphoribosyltransferase family. As to quaternary structure, homodimer.

Its subcellular location is the cytoplasm. It catalyses the reaction AMP + diphosphate = 5-phospho-alpha-D-ribose 1-diphosphate + adenine. It functions in the pathway purine metabolism; AMP biosynthesis via salvage pathway; AMP from adenine: step 1/1. In terms of biological role, catalyzes a salvage reaction resulting in the formation of AMP, that is energically less costly than de novo synthesis. The chain is Adenine phosphoribosyltransferase from Mycobacterium tuberculosis (strain CDC 1551 / Oshkosh).